The following is a 235-amino-acid chain: Probable transcriptional regulatory protein Cla_1081 (235 aa).

This sequence belongs to the TACO1 family.

It is found in the cytoplasm. In Campylobacter lari (strain RM2100 / D67 / ATCC BAA-1060), this protein is Probable transcriptional regulatory protein Cla_1081.